The primary structure comprises 127 residues: Riboflavin kinase (127 aa).

Glycine 10–lysine 15 lines the CDP pocket. 2 residues coordinate Mg(2+): threonine 39 and asparagine 41. Positions 96 and 104 each coordinate FMN. Residue isoleucine 109 to arginine 112 participates in CDP binding.

The protein belongs to the archaeal riboflavin kinase family. Requires Mg(2+) as cofactor.

The enzyme catalyses riboflavin + CTP = CDP + FMN + H(+). The protein operates within cofactor biosynthesis; FMN biosynthesis; FMN from riboflavin (CTP route): step 1/1. In terms of biological role, catalyzes the CTP-dependent phosphorylation of riboflavin (vitamin B2) to form flavin mononucleotide (FMN). This chain is Riboflavin kinase, found in Methanococcus maripaludis (strain DSM 14266 / JCM 13030 / NBRC 101832 / S2 / LL).